Reading from the N-terminus, the 372-residue chain is Phospho-2-dehydro-3-deoxyheptonate aldolase, tyrosine-inhibited (372 aa).

Belongs to the class-I DAHP synthase family.

The protein resides in the cytoplasm. It localises to the nucleus. The enzyme catalyses D-erythrose 4-phosphate + phosphoenolpyruvate + H2O = 7-phospho-2-dehydro-3-deoxy-D-arabino-heptonate + phosphate. The protein operates within metabolic intermediate biosynthesis; chorismate biosynthesis; chorismate from D-erythrose 4-phosphate and phosphoenolpyruvate: step 1/7. In terms of biological role, stereospecific condensation of phosphoenolpyruvate (PEP) and D-erythrose-4-phosphate (E4P) giving rise to 3-deoxy-D-arabino-heptulosonate-7-phosphate (DAHP). The chain is Phospho-2-dehydro-3-deoxyheptonate aldolase, tyrosine-inhibited (aro4) from Schizosaccharomyces pombe (strain 972 / ATCC 24843) (Fission yeast).